A 172-amino-acid chain; its full sequence is EPIDERMAL PATTERNING FACTOR-like protein 7 (172 aa).

The signal sequence occupies residues 1 to 27 (MDHVNPTLFHLKSLSIFTLTLLYISSP). 4 cysteine pairs are disulfide-bonded: cysteine 128–cysteine 159, cysteine 132–cysteine 138, cysteine 135–cysteine 161, and cysteine 147–cysteine 153.

Belongs to the plant cysteine rich small secretory peptide family. Epidermal patterning factor subfamily.

The protein localises to the secreted. Controls stomatal patterning. The protein is EPIDERMAL PATTERNING FACTOR-like protein 7 of Arabidopsis thaliana (Mouse-ear cress).